A 488-amino-acid polypeptide reads, in one-letter code: Protein nucleotidyltransferase YdiU (488 aa).

The ATP site is built by G91, G93, R94, K114, D126, G127, R177, and R184. The active-site Proton acceptor is the D253. N254 and D263 together coordinate Mg(2+). D263 contacts ATP.

Belongs to the SELO family. It depends on Mg(2+) as a cofactor. Requires Mn(2+) as cofactor.

It carries out the reaction L-seryl-[protein] + ATP = 3-O-(5'-adenylyl)-L-seryl-[protein] + diphosphate. It catalyses the reaction L-threonyl-[protein] + ATP = 3-O-(5'-adenylyl)-L-threonyl-[protein] + diphosphate. The enzyme catalyses L-tyrosyl-[protein] + ATP = O-(5'-adenylyl)-L-tyrosyl-[protein] + diphosphate. The catalysed reaction is L-histidyl-[protein] + UTP = N(tele)-(5'-uridylyl)-L-histidyl-[protein] + diphosphate. It carries out the reaction L-seryl-[protein] + UTP = O-(5'-uridylyl)-L-seryl-[protein] + diphosphate. It catalyses the reaction L-tyrosyl-[protein] + UTP = O-(5'-uridylyl)-L-tyrosyl-[protein] + diphosphate. Its function is as follows. Nucleotidyltransferase involved in the post-translational modification of proteins. It can catalyze the addition of adenosine monophosphate (AMP) or uridine monophosphate (UMP) to a protein, resulting in modifications known as AMPylation and UMPylation. The sequence is that of Protein nucleotidyltransferase YdiU from Bacillus cereus (strain ATCC 14579 / DSM 31 / CCUG 7414 / JCM 2152 / NBRC 15305 / NCIMB 9373 / NCTC 2599 / NRRL B-3711).